A 331-amino-acid chain; its full sequence is Tryptophan--tRNA ligase (331 aa).

Residues 10–12 (QPS) and 18–19 (GN) contribute to the ATP site. Positions 11–19 (PSGQLTLGN) match the 'HIGH' region motif. D133 contributes to the L-tryptophan binding site. ATP is bound by residues 145 to 147 (GED), V184, and 193 to 197 (KMSKS). The short motif at 193–197 (KMSKS) is the 'KMSKS' region element.

It belongs to the class-I aminoacyl-tRNA synthetase family. Homodimer.

It localises to the cytoplasm. The enzyme catalyses tRNA(Trp) + L-tryptophan + ATP = L-tryptophyl-tRNA(Trp) + AMP + diphosphate + H(+). Its function is as follows. Catalyzes the attachment of tryptophan to tRNA(Trp). The protein is Tryptophan--tRNA ligase of Listeria monocytogenes serovar 1/2a (strain ATCC BAA-679 / EGD-e).